An 86-amino-acid chain; its full sequence is uncharacterized protein (86 aa).

This is an uncharacterized protein from Beak and feather disease virus (BFDV).